Here is a 989-residue protein sequence, read N- to C-terminus: Cellulose synthase A catalytic subunit 4 [UDP-forming] (989 aa).

Residues 1 to 184 (MMESGVPPCA…SRIIPISKNK (184 aa)) are Cytoplasmic-facing. Cys9, Cys12, Cys20, Cys23, Cys28, Cys31, Cys43, and Cys46 together coordinate Zn(2+). Residues 9–47 (CAACGDDAHAACRACSYALCKACLDEDAAEGRTTCARCG) form an RING-type; degenerate zinc finger. Over residues 138–149 (KKEKKASAKKAA) the composition is skewed to basic residues. The disordered stretch occupies residues 138–158 (KKEKKASAKKAAAKAQAPPVE). A helical membrane pass occupies residues 185 to 205 (LTPYRAVIIMRLVVLGLFFHY). The Extracellular segment spans residues 206 to 213 (RITNPVYS). The chain crosses the membrane as a helical span at residues 214 to 234 (AFGLWMTSVICEIWFGFSWIL). Topologically, residues 235-772 (DQFPKWCPIN…INTIVYPFTS (538 aa)) are cytoplasmic. Residues Ser272, Lys278, Glu279, and Asp308 each contribute to the UDP-alpha-D-glucose site. Asp308 is a catalytic residue. A coiled-coil region spans residues 362-389 (VKERRAMKRDYEEYKVRINALVAKAQKT). Lys449 lines the UDP-alpha-D-glucose pocket. Mn(2+)-binding residues include Lys450 and Asp474. The active site involves Asp688. Residues 773-793 (LPLIAYCCLPAICLLTGKFII) traverse the membrane as a helical segment. Over 794 to 798 (PTLSN) the chain is Extracellular. Residues 799 to 819 (AATIWFLGLFISIIVTSVLEL) form a helical membrane-spanning segment. The Cytoplasmic portion of the chain corresponds to 820–835 (RWSGIGIEDWWRNEQF). A helical transmembrane segment spans residues 836–856 (WVIGGVSAHLFAVFQGILKMI). Topologically, residues 857-884 (AGLDTNFTVTAKATDDTEFGELYVFKWT) are extracellular. N-linked (GlcNAc...) asparagine glycosylation is present at Asn862. The chain crosses the membrane as a helical span at residues 885-905 (TVLIPPTSILVLNLVGVVAGF). Topologically, residues 906–916 (SDALNSGYESW) are cytoplasmic. A helical transmembrane segment spans residues 917-937 (GPLFGKVFFAMWVIMHLYPFL). Residues 938 to 946 (KGLMGRQNR) lie on the Extracellular side of the membrane. A helical transmembrane segment spans residues 947 to 967 (TPTIVVLWSVLLASVFSLLWV). The Cytoplasmic segment spans residues 968–989 (KIDPFIGSSETTTTNSCANFDC).

The protein belongs to the glycosyltransferase 2 family. Plant cellulose synthase subfamily. It depends on Mn(2+) as a cofactor. Zn(2+) is required as a cofactor.

It localises to the cell membrane. The catalysed reaction is [(1-&gt;4)-beta-D-glucosyl](n) + UDP-alpha-D-glucose = [(1-&gt;4)-beta-D-glucosyl](n+1) + UDP + H(+). It functions in the pathway glycan metabolism; plant cellulose biosynthesis. In terms of biological role, catalytic subunit of cellulose synthase terminal complexes ('rosettes'), required for beta-1,4-glucan microfibril crystallization, a major mechanism of the cell wall formation. Involved in the secondary cell wall formation. The protein is Cellulose synthase A catalytic subunit 4 [UDP-forming] (CESA4) of Oryza sativa subsp. indica (Rice).